A 331-amino-acid chain; its full sequence is Probable cyclic nucleotide synthase IK1_05630 (331 aa).

The protein belongs to the CD-NTase family. D12 subfamily.

Functionally, cyclic nucleotide synthase (second messenger synthase) of a CBASS antivirus system. CBASS (cyclic oligonucleotide-based antiphage signaling system) provides immunity against bacteriophage. The CD-NTase protein synthesizes cyclic nucleotides in response to infection; these serve as specific second messenger signals. The signals activate a diverse range of effectors, leading to bacterial cell death and thus abortive phage infection. A type I-B CBASS system. Its function is as follows. Probably a cyclic nucleotide synthase that makes second messenger nucleotide which activates a CBASS antiviral defense system. Protects B.subtilis against phage infection. When IK1_05630 and IK1_05631 are introduced in B.subtilis BEST7003 there is 1000-fold protection against phage SBSphiC. Both genes are required for protection. Activation leads to bacterial cell lysis and death, which occurs before the phage has finished its replication cycle, thus protecting non-infected bacteria by aborting the phage infection and preventing its propagation. The chain is Probable cyclic nucleotide synthase IK1_05630 from Bacillus cereus (strain VD146).